Consider the following 805-residue polypeptide: MSLTKTKRVSDVAKELGVKSKEIIEFLNEYYPRPDGKPWKASHGLDEQALEMIYDAFGIKEEEEKEEVVTEQAQAPAEVEEKKEEEKKEEVIVEEVVEEKKPEVIVEEIEEKKEEEEKKEEEKPKKSVEELIKEILEKKEKEKEKKKVEKERKEEKVRVVEVKKEERKEEKKEEKKEEEKPKIKMSKKEREIMRKLEHAVEKEKKKQEKREKEKKKKEEEVKIIYIPEVITVRELAELLDVPANKVIAELMKRGVLATINQPVPPEVAVEVAESFGYLAEVKKEEEELEEEALLKEEEEREEELQPRPPIVVVMGHVDHGKTTLLDRIRKTNVAEREKGGITQHIGASQVELPDGRKITFLDTPGHEAFTTLRARGAKVTDISVLVVAADDGVMPQTIEAINHAKAFNVPIIVAVNKIDKPNADPMKVRRELSEHGLIPEEWGGDTIFVDISAKTGQNVDQLLEMILLLADILELKANPNKKARGTIIESKLDRKRGPVATVIVEDGTLRVGDHFVAGTTYGRVRAMFDDKGRQVKEAPPSTPVEVLGFEELPEAGDELIVVDDERTAREIAEKRKEKKEREEKLQTIRLEDIYKKIQTGETKELRIVLKTDTMGSLEALKKSLEELSNEKVQVKIIHGAVGGITENDIMLAKASGAIVIGFNTRPDPKARELMEKEKVDVRLYGVIYEAIEDVKKALVGLLEPIKKEEVIGMAEVRATFKIKKVGTVAGCYVLNGKLVRGAKARLIREGVVIYDGEIESLKRFKEDVQEVTAGYECGVKLKDYNDVKVGDQIECYEIRYEKPTL.

Disordered stretches follow at residues 68–89 (VVTEQAQAPAEVEEKKEEEKKE) and 141–215 (KEKE…KEKK). Basic and acidic residues predominate over residues 79–89 (VEEKKEEEKKE). One can recognise a tr-type G domain in the interval 306-474 (PRPPIVVVMG…MILLLADILE (169 aa)). Residues 315 to 322 (GHVDHGKT) form a G1 region. 315 to 322 (GHVDHGKT) provides a ligand contact to GTP. Residues 340–344 (GITQH) are G2. The G3 stretch occupies residues 362–365 (DTPG). GTP contacts are provided by residues 362–366 (DTPGH) and 416–419 (NKID). The segment at 416-419 (NKID) is G4. A G5 region spans residues 452–454 (SAK).

Belongs to the TRAFAC class translation factor GTPase superfamily. Classic translation factor GTPase family. IF-2 subfamily.

Its subcellular location is the cytoplasm. One of the essential components for the initiation of protein synthesis. Protects formylmethionyl-tRNA from spontaneous hydrolysis and promotes its binding to the 30S ribosomal subunits. Also involved in the hydrolysis of GTP during the formation of the 70S ribosomal complex. This chain is Translation initiation factor IF-2 (infB), found in Aquifex aeolicus (strain VF5).